A 593-amino-acid polypeptide reads, in one-letter code: Aspartate--tRNA(Asp/Asn) ligase (593 aa).

Residue Glu-173 coordinates L-aspartate. The interval 197-200 (QLFK) is aspartate. Arg-219 provides a ligand contact to L-aspartate. ATP contacts are provided by residues 219–221 (RDE) and Gln-228. Residue His-451 participates in L-aspartate binding. Glu-485 lines the ATP pocket. Arg-492 is an L-aspartate binding site. 537–540 (GIDR) provides a ligand contact to ATP.

This sequence belongs to the class-II aminoacyl-tRNA synthetase family. Type 1 subfamily. As to quaternary structure, homodimer.

Its subcellular location is the cytoplasm. The enzyme catalyses tRNA(Asx) + L-aspartate + ATP = L-aspartyl-tRNA(Asx) + AMP + diphosphate. Functionally, aspartyl-tRNA synthetase with relaxed tRNA specificity since it is able to aspartylate not only its cognate tRNA(Asp) but also tRNA(Asn). Reaction proceeds in two steps: L-aspartate is first activated by ATP to form Asp-AMP and then transferred to the acceptor end of tRNA(Asp/Asn). The polypeptide is Aspartate--tRNA(Asp/Asn) ligase (Legionella pneumophila (strain Corby)).